The chain runs to 283 residues: MPVSRYAVFGHPVAHSLSPAIHADFGKQTGIALDYTAIDAAPEEFTAALERFAADGGKGANVTLPLKEAAFALSASPSDRARVAGAVNTLVRNDGQWQGDNTDGAGLVRDLTERHGLDLRGRRVLLLGAGGAARGVAPALLEAGITEMVVVNRSPERADALCDALGEPGRVVSRYLEDLRELGDFELIVNATAAGRDRDAGAFALPLGLVNSLTAAVDLNYGATAIAFLAWARSAQCRYAIDGLGMLVEQAAESFALWHGVRPQTDPVYDALRARDAVLVSAD.

Shikimate contacts are provided by residues 16–18 (SLS) and Thr63. The active-site Proton acceptor is the Lys67. Asp79 lines the NADP(+) pocket. 2 residues coordinate shikimate: Asn88 and Asp103. Residues 128 to 132 (GAGGA), Ala223, and Gly243 each bind NADP(+).

This sequence belongs to the shikimate dehydrogenase family. Homodimer.

It catalyses the reaction shikimate + NADP(+) = 3-dehydroshikimate + NADPH + H(+). It participates in metabolic intermediate biosynthesis; chorismate biosynthesis; chorismate from D-erythrose 4-phosphate and phosphoenolpyruvate: step 4/7. In terms of biological role, involved in the biosynthesis of the chorismate, which leads to the biosynthesis of aromatic amino acids. Catalyzes the reversible NADPH linked reduction of 3-dehydroshikimate (DHSA) to yield shikimate (SA). The protein is Shikimate dehydrogenase (NADP(+)) of Xanthomonas campestris pv. campestris (strain B100).